Consider the following 124-residue polypeptide: Snake venom vascular endothelial growth factor toxin apiscin (124 aa).

The first 24 residues, 1-24, serve as a signal peptide directing secretion; sequence MAAYLLAVAILFCIQGWPSGTVQG. Q25 bears the Pyrrolidone carboxylic acid mark. 3 disulfide bridges follow: C38–C80, C69–C115, and C73–C117.

The protein belongs to the PDGF/VEGF growth factor family. Snake venom VEGF subfamily. In terms of assembly, homodimer; disulfide-linked. Interacts with VEGF receptor-1 (FLT1) with a high affinity, whereas it binds to VEGF receptor-2 (KDR) with a low affinity. Does not bind VEGF receptor-3 (FLT4). As to expression, expressed by the venom gland.

The protein localises to the secreted. Functionally, snake venom VEGFs that may contribute to venom dispersion and prey subjugation by inducing vascular permeability and hypotension. This protein induces an increase in capillary permeability after intradermal injection, as well as a drastic hypotensive effect after intravenous injection. The hypotension is mediated by nitric oxide (NO), which is produced by VEGF-activated endothelium NO synthase. Also induces angiogenesis in vitro. Like other crotalid VEGFs, this protein interacts with VEGF receptor-1 (FLT1) with a high affinity, whereas it binds to VEGF receptor-2 (KDR) with a low affinity. The sequence is that of Snake venom vascular endothelial growth factor toxin apiscin from Agkistrodon piscivorus piscivorus (Eastern cottonmouth).